A 202-amino-acid chain; its full sequence is Endothelin-1 (202 aa).

The first 25 residues, 1-25 (MDYFPMIFALLFVAFQGAPEAAVLG), serve as a signal peptide directing secretion. The propeptide occupies 26–50 (TELSAGAEDGGEKPAPATPWRPRRS). Cystine bridges form between cysteine 53–cysteine 67 and cysteine 55–cysteine 63. The propeptide occupies 74 to 202 (VNTPEHVVPY…DKKVIYNRAH (129 aa)). The tract at residues 110–124 (CQCASQTDKKCWNFC) is endothelin-like.

The protein belongs to the endothelin/sarafotoxin family.

The protein resides in the secreted. Its function is as follows. Endothelins are endothelium-derived vasoconstrictor peptides. Probable ligand for G-protein coupled receptors EDNRA and EDNRB which activates PTK2B, BCAR1, BCAR3 and, GTPases RAP1 and RHOA cascade in glomerular mesangial cells. Also binds the DEAR/FBXW7-AS1 receptor. Promotes mesenteric arterial wall remodeling via activation of ROCK signaling and subsequent colocalization of NFATC3 with F-actin filaments. NFATC3 then translocates to the nucleus where it subsequently promotes the transcription of the smooth muscle hypertrophy and differentiation marker ACTA2. This Bos taurus (Bovine) protein is Endothelin-1 (EDN1).